Consider the following 577-residue polypeptide: Copine-8 (577 aa).

C2 domains are found at residues threonine 19–lysine 146 and lysine 155–tyrosine 278. Ca(2+) contacts are provided by aspartate 52, aspartate 58, aspartate 112, aspartate 114, serine 117, lysine 122, aspartate 124, aspartate 186, aspartate 192, aspartate 248, aspartate 250, and aspartate 256. A Phosphoserine modification is found at serine 273. One can recognise a VWFA domain in the interval asparagine 322–isoleucine 523.

This sequence belongs to the copine family. Ca(2+) serves as cofactor.

In terms of biological role, probable calcium-dependent phospholipid-binding protein that may play a role in calcium-mediated intracellular processes. The protein is Copine-8 of Mus musculus (Mouse).